The sequence spans 172 residues: uncharacterized protein (172 aa).

Gly residues predominate over residues 147-159 (AGSGSGSGSGSGS). The interval 147–172 (AGSGSGSGSGSGSDTGPFKKSQYKIL) is disordered.

This is an uncharacterized protein from Homo sapiens (Human).